Consider the following 536-residue polypeptide: Aminopeptidase (536 aa).

Positions 1–24 are cleaved as a signal peptide; the sequence is MSNKNNLRYALGALALSVSAASLA. The PA domain occupies 152–255; it reads AGDVTAKVVP…ATYDNGVAWS (104 aa). Thr-196 is subject to Phosphothreonine. Zn(2+) contacts are provided by His-296 and Asp-308. The active-site Proton acceptor is Glu-340. 3 residues coordinate Zn(2+): Glu-341, Asp-369, and His-467. A disulfide bridge connects residues Cys-465 and Cys-470.

Belongs to the peptidase M28 family. M28A subfamily. Requires Zn(2+) as cofactor.

It localises to the secreted. The enzyme catalyses Release of an N-terminal amino acid, Xaa-|-Yaa-, in which Xaa is preferably Leu, but may be other amino acids including Pro although not Arg or Lys, and Yaa may be Pro. Amino acid amides and methyl esters are also readily hydrolyzed, but rates on arylamides are exceedingly low.. A secreted aminopeptidase. Acts on free N-terminal amino groups with a very strong preference for Leu in the first position. This Pseudomonas aeruginosa (strain UCBPP-PA14) protein is Aminopeptidase.